An 89-amino-acid chain; its full sequence is Snake venom serine protease rhinocerase (89 aa).

In terms of domain architecture, Peptidase S1 spans 1-89; sequence VIGGAECDIN…KVFDYIPWIK (89 aa). The Charge relay system role is filled by D45. An intrachain disulfide couples C64 to C69.

The protein belongs to the peptidase S1 family. Snake venom subfamily. Post-translationally, glycosylated. In terms of tissue distribution, expressed by the venom gland.

The protein resides in the secreted. With respect to regulation, inhibited by PMSF. Not inhibited by benzamidine. In terms of biological role, snake venom serine protease that cleaves fibrinogen alpha and beta chains (FGA and FGB), but not gamma chains. Exhibits fibrinolytic and kininogenolytic. Preferentially cleaves after Arg and Lys residues. The chain is Snake venom serine protease rhinocerase from Bitis rhinoceros (West African gaboon viper).